A 406-amino-acid polypeptide reads, in one-letter code: Phosphorylase b kinase gamma catalytic chain, liver/testis isoform (406 aa).

The Protein kinase domain maps to 24 to 291; that stretch reads YDPKDVIGRG…AEQALQHPFF (268 aa). ATP contacts are provided by residues 30 to 38 and Lys-53; that span reads IGRGVSSVV. Asp-153 functions as the Proton acceptor in the catalytic mechanism. Residues 306-330 form a calmodulin-binding (domain-N) region; it reads QRFRVAVWTVLAAGRVALSAHRIRP. A calmodulin-binding (domain-C) region spans residues 346 to 370; sequence VRRLIDNCAFRLYGHWVKKGEQQNR.

It belongs to the protein kinase superfamily. CAMK Ser/Thr protein kinase family. As to quaternary structure, hexadecamer of 4 heterotetramers, each composed of alpha, beta, gamma, and delta subunits. Alpha (PHKA1 or PHKA2) and beta (PHKB) are regulatory subunits, gamma (PHKG1 or PHKG2) is the catalytic subunit, and delta is calmodulin.

It catalyses the reaction 2 ATP + phosphorylase b = 2 ADP + phosphorylase a.. Catalytic subunit of the phosphorylase b kinase (PHK), which mediates the neural and hormonal regulation of glycogen breakdown (glycogenolysis) by phosphorylating and thereby activating glycogen phosphorylase. May regulate glycogeneolysis in the testis. In vitro, phosphorylates PYGM. The polypeptide is Phosphorylase b kinase gamma catalytic chain, liver/testis isoform (PHKG2) (Bos taurus (Bovine)).